We begin with the raw amino-acid sequence, 254 residues long: DNA repair protein RecO (254 aa).

The protein belongs to the RecO family.

Functionally, involved in DNA repair and RecF pathway recombination. The protein is DNA repair protein RecO of Agrobacterium fabrum (strain C58 / ATCC 33970) (Agrobacterium tumefaciens (strain C58)).